The sequence spans 158 residues: 6,7-dimethyl-8-ribityllumazine synthase (158 aa).

5-amino-6-(D-ribitylamino)uracil is bound by residues F24, 62–64 (CFE), and 86–88 (AVI). 91–92 (DT) serves as a coordination point for (2S)-2-hydroxy-3-oxobutyl phosphate. H94 serves as the catalytic Proton donor. 5-amino-6-(D-ribitylamino)uracil is bound at residue F119. R133 provides a ligand contact to (2S)-2-hydroxy-3-oxobutyl phosphate.

The protein belongs to the DMRL synthase family.

It carries out the reaction (2S)-2-hydroxy-3-oxobutyl phosphate + 5-amino-6-(D-ribitylamino)uracil = 6,7-dimethyl-8-(1-D-ribityl)lumazine + phosphate + 2 H2O + H(+). Its pathway is cofactor biosynthesis; riboflavin biosynthesis; riboflavin from 2-hydroxy-3-oxobutyl phosphate and 5-amino-6-(D-ribitylamino)uracil: step 1/2. In terms of biological role, catalyzes the formation of 6,7-dimethyl-8-ribityllumazine by condensation of 5-amino-6-(D-ribitylamino)uracil with 3,4-dihydroxy-2-butanone 4-phosphate. This is the penultimate step in the biosynthesis of riboflavin. The sequence is that of 6,7-dimethyl-8-ribityllumazine synthase from Picosynechococcus sp. (strain ATCC 27264 / PCC 7002 / PR-6) (Agmenellum quadruplicatum).